Reading from the N-terminus, the 355-residue chain is Probable nitronate monooxygenase (355 aa).

FMN-binding positions include Asn-71, Gln-175, Gly-180, Gly-219, and 238 to 241; that span reads QMGT.

This sequence belongs to the nitronate monooxygenase family. NMO class I subfamily. FMN serves as cofactor.

It catalyses the reaction 3 propionate 3-nitronate + 3 O2 + H2O = 3 3-oxopropanoate + 2 nitrate + nitrite + H2O2 + 3 H(+). In terms of biological role, nitronate monooxygenase that uses molecular oxygen to catalyze the oxidative denitrification of alkyl nitronates. Acts on propionate 3-nitronate (P3N), the presumed physiological substrate. Probably functions in the detoxification of P3N, a metabolic poison produced by plants and fungi as a defense mechanism. The chain is Probable nitronate monooxygenase from Staphylococcus saprophyticus subsp. saprophyticus (strain ATCC 15305 / DSM 20229 / NCIMB 8711 / NCTC 7292 / S-41).